Consider the following 437-residue polypeptide: Chromosomal replication initiator protein DnaA (437 aa).

Positions 1-69 (MLGDTTLKQL…AHLFELSTGI (69 aa)) are domain I, interacts with DnaA modulators. The tract at residues 69 to 100 (IRPKIEIRLGSLKKDVKSSSPKAGVSKGQKST) is domain II. A domain III, AAA+ region region spans residues 101-315 (ILNPSFTFDS…GIIIKLNAYA (215 aa)). ATP contacts are provided by Gly-145, Gly-147, Lys-148, and Thr-149. Residues 316–437 (NLMNQEITLQ…ELKNKIKSRN (122 aa)) form a domain IV, binds dsDNA region.

The protein belongs to the DnaA family. In terms of assembly, oligomerizes as a right-handed, spiral filament on DNA at oriC.

It is found in the cytoplasm. Functionally, plays an essential role in the initiation and regulation of chromosomal replication. ATP-DnaA binds to the origin of replication (oriC) to initiate formation of the DNA replication initiation complex once per cell cycle. Binds the DnaA box (a 9 base pair repeat at the origin) and separates the double-stranded (ds)DNA. Forms a right-handed helical filament on oriC DNA; dsDNA binds to the exterior of the filament while single-stranded (ss)DNA is stabiized in the filament's interior. The ATP-DnaA-oriC complex binds and stabilizes one strand of the AT-rich DNA unwinding element (DUE), permitting loading of DNA polymerase. After initiation quickly degrades to an ADP-DnaA complex that is not apt for DNA replication. Binds acidic phospholipids. The protein is Chromosomal replication initiator protein DnaA of Wolinella succinogenes (strain ATCC 29543 / DSM 1740 / CCUG 13145 / JCM 31913 / LMG 7466 / NCTC 11488 / FDC 602W) (Vibrio succinogenes).